The sequence spans 134 residues: Phosphoribosyl-AMP cyclohydrolase (134 aa).

Aspartate 77 provides a ligand contact to Mg(2+). A Zn(2+)-binding site is contributed by cysteine 78. Mg(2+) contacts are provided by aspartate 79 and aspartate 81. Positions 95 and 102 each coordinate Zn(2+).

This sequence belongs to the PRA-CH family. Homodimer. Mg(2+) serves as cofactor. Requires Zn(2+) as cofactor.

It is found in the cytoplasm. The catalysed reaction is 1-(5-phospho-beta-D-ribosyl)-5'-AMP + H2O = 1-(5-phospho-beta-D-ribosyl)-5-[(5-phospho-beta-D-ribosylamino)methylideneamino]imidazole-4-carboxamide. It participates in amino-acid biosynthesis; L-histidine biosynthesis; L-histidine from 5-phospho-alpha-D-ribose 1-diphosphate: step 3/9. Its function is as follows. Catalyzes the hydrolysis of the adenine ring of phosphoribosyl-AMP. The protein is Phosphoribosyl-AMP cyclohydrolase of Pseudomonas paraeruginosa (strain DSM 24068 / PA7) (Pseudomonas aeruginosa (strain PA7)).